The following is a 427-amino-acid chain: Adenylosuccinate synthetase (427 aa).

Residues 12–18 (GDEGKGK) and 40–42 (GHT) each bind GTP. The active-site Proton acceptor is Asp13. Residues Asp13 and Gly40 each contribute to the Mg(2+) site. Residues 13–16 (DEGK), 38–41 (NAGH), Thr127, Arg141, Gln222, Thr237, and Arg301 each bind IMP. His41 serves as the catalytic Proton donor. 297–303 (VVTKRPR) lines the substrate pocket. GTP-binding positions include Arg303, 329 to 331 (SLD), and 411 to 413 (AVG).

It belongs to the adenylosuccinate synthetase family. As to quaternary structure, homodimer. Mg(2+) serves as cofactor.

It localises to the cytoplasm. It catalyses the reaction IMP + L-aspartate + GTP = N(6)-(1,2-dicarboxyethyl)-AMP + GDP + phosphate + 2 H(+). It participates in purine metabolism; AMP biosynthesis via de novo pathway; AMP from IMP: step 1/2. In terms of biological role, plays an important role in the de novo pathway of purine nucleotide biosynthesis. Catalyzes the first committed step in the biosynthesis of AMP from IMP. This is Adenylosuccinate synthetase from Leuconostoc citreum (strain KM20).